The sequence spans 153 residues: uncharacterized protein (153 aa).

Alanine 2 carries the N-acetylalanine modification.

This is an uncharacterized protein from Arabidopsis thaliana (Mouse-ear cress).